The chain runs to 342 residues: S-adenosylmethionine:tRNA ribosyltransferase-isomerase (342 aa).

Belongs to the QueA family. In terms of assembly, monomer.

Its subcellular location is the cytoplasm. It catalyses the reaction 7-aminomethyl-7-carbaguanosine(34) in tRNA + S-adenosyl-L-methionine = epoxyqueuosine(34) in tRNA + adenine + L-methionine + 2 H(+). The protein operates within tRNA modification; tRNA-queuosine biosynthesis. Its function is as follows. Transfers and isomerizes the ribose moiety from AdoMet to the 7-aminomethyl group of 7-deazaguanine (preQ1-tRNA) to give epoxyqueuosine (oQ-tRNA). This is S-adenosylmethionine:tRNA ribosyltransferase-isomerase from Geobacillus kaustophilus (strain HTA426).